A 657-amino-acid chain; its full sequence is Cyclic-di-AMP phosphodiesterase PdeA (657 aa).

The next 2 membrane-spanning stretches (helical) occupy residues 13–35 (PLYGLIAATIILSVITFFFSWWL) and 37–53 (ALVVVGGIILTVAMFYF). The tract at residues 74–137 (RSEEEALVEM…ITGNDEKGIM (64 aa)) is PAS-like. One can recognise a GGDEF domain in the interval 175–303 (NKSVFAVIFL…GGDQVVIKQP (129 aa)). Positions 342 to 498 (VFVMGHRYPD…IEATALLSGI (157 aa)) are DHH. The Mn(2+) site is built by His347, Asp351, Asp353, Asp422, His446, and Asp501. Residues 592 to 645 (VITLRPDKLIGISARSLGQINVQVIMEKLGGGGHLSNAATQLKDVTIAEAEKQL) form a DHHA1 region.

Belongs to the GdpP/PdeA phosphodiesterase family. Heme b serves as cofactor. It depends on Mn(2+) as a cofactor.

Its subcellular location is the cell membrane. The enzyme catalyses 3',3'-c-di-AMP + H2O = 5'-O-phosphonoadenylyl-(3'-&gt;5')-adenosine + H(+). In terms of biological role, has phosphodiesterase (PDE) activity against cyclic-di-AMP (c-di-AMP). Overexpression decreases export of c-di-AMP, leads to slightly increased susceptibility to the antibiotic cefuroxime and somewhat slower growth in macrophages. There are at least 2 PDEs for c-di-AMP in this bacteria (this one and pgpH); this may be the major PDE for intracellular growth in host macrophages. During host infection c-di-AMP is secreted into the host cytoplasm which leads to interferon-beta production and secretion by the host. c-di-AMP is a second messenger that mediates growth, cell wall stability and virulence. May monitor cellular heme or NO levels. This Listeria monocytogenes serotype 1/2a (strain 10403S) protein is Cyclic-di-AMP phosphodiesterase PdeA.